A 354-amino-acid chain; its full sequence is tRNA-specific 2-thiouridylase MnmA (354 aa).

Residues 6–13 and L33 each bind ATP; that span reads LLSGGVDS. C100 functions as the Nucleophile in the catalytic mechanism. A disulfide bond links C100 and C195. Residue G123 coordinates ATP. Residues 145–147 are interaction with tRNA; it reads KDQ. The active-site Cysteine persulfide intermediate is C195.

This sequence belongs to the MnmA/TRMU family.

It is found in the cytoplasm. It carries out the reaction S-sulfanyl-L-cysteinyl-[protein] + uridine(34) in tRNA + AH2 + ATP = 2-thiouridine(34) in tRNA + L-cysteinyl-[protein] + A + AMP + diphosphate + H(+). Catalyzes the 2-thiolation of uridine at the wobble position (U34) of tRNA, leading to the formation of s(2)U34. The protein is tRNA-specific 2-thiouridylase MnmA of Borrelia recurrentis (strain A1).